A 1118-amino-acid polypeptide reads, in one-letter code: MPAVASVPKELYLSSSLKDLNKKTEVKPEKISTKSYVHSALKIFKTAEECRLDRDEERAYVLYMKYVTVYNLIKKRPDFKQQQDYFHSILGPGNIKKAVEEAERLSESLKLRYEEAEVRKKLEEKDRQEEAQRLQQKRQETGREDGGTLAKGSLENVLDSKDKTQKSNGEKNEKCETKEKGAITAKELYTMMTDKNISLIIMDARRMQDYQDSCILHSLSVPEEAISPGVTASWIEAHLPDDSKDTWKKRGNVEYVVLLDWFSSAKDLQIGTTLRSLKDALFKWESKTVLRNEPLVLEGGYENWLLCYPQYTTNAKVTPPPRRQNEEVSISLDFTYPSLEESIPSKPAAQTPPASIEVDENIELISGQNERMGPLNISTPVEPVAASKSDVSPIIQPVPSIKNVPQIDRTKKPAVKLPEEHRIKSESTNHEQQSPQSGKVIPDRSTKPVVFSPTLMLTDEEKARIHAETALLMEKNKQEKELRERQQEEQKEKLRKEEQEQKAKKKQEAEENEITEKQQKAKEEMEKKESEQAKKEDKETSAKRGKEITGVKRQSKSEHETSDAKKSVEDRGKRCPTPEIQKKSTGDVPHTSVTGDSGSGKPFKIKGQPESGILRTGTFREDTDDTERNKAQREPLTRARSEEMGRIVPGLPSGWAKFLDPITGTFRYYHSPTNTVHMYPPEMAPSSAPPSTPPTHKAKPQIPAERDREPSKLKRSYSSPDITQAIQEEEKRKPTVTPTVNRENKPTCYPKAEISRLSASQIRNLNPVFGGSGPALTGLRNLGNTCYMNSILQCLCNAPHLADYFNRNCYQDDINRSNLLGHKGEVAEEFGIIMKALWTGQYRYISPKDFKITIGKINDQFAGYSQQDSQELLLFLMDGLHEDLNKADNRKRYKEENNDHLDDFKAAEHAWQKHKQLNESIIVALFQGQFKSTVQCLTCHKKSRTFEAFMYLSLPLASTSKCTLQDCLRLFSKEEKLTDNNRFYCSHCRARRDSLKKIEIWKLPPVLLVHLKRFSYDGRWKQKLQTSVDFPLENLDLSQYVIGPKNNLKKYNLFSVSNHYGGLDGGHYTAYCKNAARQRWFKFDDHEVSDISVSSVKSSAAYILFYTSLGPRVTDVAT.

The region spanning 33–116 is the MIT domain; it reads TKSYVHSALK…ESLKLRYEEA (84 aa). 2 stretches are compositionally biased toward basic and acidic residues: residues 120–146 and 158–177; these read KKLE…REDG and LDSK…KCET. Positions 120 to 177 are disordered; the sequence is KKLEEKDRQEEAQRLQQKRQETGREDGGTLAKGSLENVLDSKDKTQKSNGEKNEKCET. Position 160 is a phosphoserine (serine 160). Positions 195–313 constitute a Rhodanese domain; it reads KNISLIIMDA…WLLCYPQYTT (119 aa). Phosphoserine is present on residues serine 392 and serine 400. A disordered region spans residues 402-447; the sequence is KNVPQIDRTKKPAVKLPEEHRIKSESTNHEQQSPQSGKVIPDRSTK. Residues 405–413 carry the SH3-binding motif; it reads PQIDRTKKP. Residues 417-429 are compositionally biased toward basic and acidic residues; it reads LPEEHRIKSESTN. Serine 452 bears the Phosphoserine mark. The span at 475–573 shows a compositional bias: basic and acidic residues; the sequence is KNKQEKELRE…AKKSVEDRGK (99 aa). Disordered regions lie at residues 475–648 and 679–746; these read KNKQ…GRIV and YPPE…ENKP. Residue threonine 577 is modified to Phosphothreonine. The span at 618 to 645 shows a compositional bias: basic and acidic residues; the sequence is TFREDTDDTERNKAQREPLTRARSEEMG. Positions 716–726 are enriched in polar residues; that stretch reads SYSSPDITQAI. Phosphoserine is present on residues serine 718 and serine 719. Residues 777–1109 form the USP domain; it reads TGLRNLGNTC…AAYILFYTSL (333 aa). Cysteine 786 functions as the Nucleophile in the catalytic mechanism. A Phosphothreonine modification is found at threonine 945. Histidine 1067 serves as the catalytic Proton acceptor.

This sequence belongs to the peptidase C19 family. Forms a ternary complex with RNF128 and OTUB1. Interacts (via C-terminal UCH catalytic domain) with OTUB1 isoform 1. Interacts with STAM2 (via SH3 domain). Interacts with DNAJB3, EGFR, EPS15, RASGRF1, RNF41, YWHAE, YWHAG and YWHAZ. Interacts with NBR1, RASGRF1, RNF41 and IST1. Associates with the ESCRT-0 complex and with microtubules. Interacts with BIRC6/bruce and KIF23/MKLP1. In terms of assembly, (Microbial infection) Interacts with Zika virus non-structural protein 1. Post-translationally, phosphorylation of Ser-718 is essential for interaction with YWHAE and for cytosol localization. Undergoes dephosphorylation at Ser-718 in the M phase. Tyrosine-phosphorylated in its N-terminal half in an EGFR-dependent manner. In terms of processing, ubiquitinated. Inactive form is mostly monoubiquitinated, but polyubiquitination happens too. Ubiquitination is increased in EGF-stimulated cells. Ubiquitination of active form is undetectable, suggesting a possibility that USP8 deubiquitinates itself, thereby regulating its own function.

The protein resides in the cytoplasm. Its subcellular location is the nucleus. The protein localises to the endosome membrane. It localises to the cell membrane. It catalyses the reaction Thiol-dependent hydrolysis of ester, thioester, amide, peptide and isopeptide bonds formed by the C-terminal Gly of ubiquitin (a 76-residue protein attached to proteins as an intracellular targeting signal).. Functionally, hydrolase that can remove conjugated ubiquitin from proteins and therefore plays an important regulatory role at the level of protein turnover by preventing degradation. Converts both 'Lys-48' an 'Lys-63'-linked ubiquitin chains. Catalytic activity is enhanced in the M phase. Involved in cell proliferation. Required to enter into S phase in response to serum stimulation. May regulate T-cell anergy mediated by RNF128 via the formation of a complex containing RNF128 and OTUB1. Probably regulates the stability of STAM2 and RASGRF1. Regulates endosomal ubiquitin dynamics, cargo sorting, membrane traffic at early endosomes, and maintenance of ESCRT-0 stability. The level of protein ubiquitination on endosomes is essential for maintaining the morphology of the organelle. Deubiquitinates EPS15 and controls tyrosine kinase stability. Removes conjugated ubiquitin from EGFR thus regulating EGFR degradation and downstream MAPK signaling. Involved in acrosome biogenesis through interaction with the spermatid ESCRT-0 complex and microtubules. Deubiquitinates BIRC6/bruce and KIF23/MKLP1. Deubiquitinates BACE1 which inhibits BACE1 lysosomal degradation and modulates BACE-mediated APP cleavage and amyloid-beta formation. This chain is Ubiquitin carboxyl-terminal hydrolase 8, found in Homo sapiens (Human).